The following is a 397-amino-acid chain: Dual-specificity RNA methyltransferase RlmN (397 aa).

Glu-116 (proton acceptor) is an active-site residue. Residues 122-366 (EDDRGTLCIS…SPIRKTRGDD (245 aa)) form the Radical SAM core domain. Cys-129 and Cys-371 are joined by a disulfide. 3 residues coordinate [4Fe-4S] cluster: Cys-136, Cys-140, and Cys-143. S-adenosyl-L-methionine-binding positions include 195-196 (GE), Ser-227, 249-251 (SFH), and Asn-328. The active-site S-methylcysteine intermediate is Cys-371.

This sequence belongs to the radical SAM superfamily. RlmN family. It depends on [4Fe-4S] cluster as a cofactor.

It is found in the cytoplasm. The catalysed reaction is adenosine(2503) in 23S rRNA + 2 reduced [2Fe-2S]-[ferredoxin] + 2 S-adenosyl-L-methionine = 2-methyladenosine(2503) in 23S rRNA + 5'-deoxyadenosine + L-methionine + 2 oxidized [2Fe-2S]-[ferredoxin] + S-adenosyl-L-homocysteine. The enzyme catalyses adenosine(37) in tRNA + 2 reduced [2Fe-2S]-[ferredoxin] + 2 S-adenosyl-L-methionine = 2-methyladenosine(37) in tRNA + 5'-deoxyadenosine + L-methionine + 2 oxidized [2Fe-2S]-[ferredoxin] + S-adenosyl-L-homocysteine. Functionally, specifically methylates position 2 of adenine 2503 in 23S rRNA and position 2 of adenine 37 in tRNAs. m2A2503 modification seems to play a crucial role in the proofreading step occurring at the peptidyl transferase center and thus would serve to optimize ribosomal fidelity. The chain is Dual-specificity RNA methyltransferase RlmN from Ruegeria sp. (strain TM1040) (Silicibacter sp.).